The sequence spans 263 residues: Isoprenyl transferase (263 aa).

D38 is a catalytic residue. D38 contacts Mg(2+). Substrate contacts are provided by residues G39–R42, H55, and S83–D85. The active-site Proton acceptor is the N86. Residues F87, R89, R212, and R218–S220 contribute to the substrate site. E231 contacts Mg(2+).

This sequence belongs to the UPP synthase family. Homodimer. Mg(2+) serves as cofactor.

Catalyzes the condensation of isopentenyl diphosphate (IPP) with allylic pyrophosphates generating different type of terpenoids. This Thermus thermophilus (strain ATCC BAA-163 / DSM 7039 / HB27) protein is Isoprenyl transferase.